A 259-amino-acid chain; its full sequence is Probable WRKY transcription factor 65 (259 aa).

Residues 1–17 show a composition bias toward basic and acidic residues; it reads MKRGLDMARSYNDHESS. Disordered stretches follow at residues 1 to 101 and 126 to 165; these read MKRG…RCSS and TSEH…EEED. The segment covering 18–31 has biased composition (polar residues); it reads QETGPESPNSSTFN. The segment covering 47–69 has biased composition (basic and acidic residues); the sequence is RSVEKRVVNVPMKEMEGSRHKGD. The segment at residues 68–134 is a DNA-binding region (WRKY); sequence GDTTPPSDSW…YTSEHNHPWP (67 aa). Residues 154–165 are compositionally biased toward acidic residues; that stretch reads EPEVEPEAEEED.

It localises to the nucleus. In terms of biological role, transcription factor. Interacts specifically with the W box (5'-(T)TGAC[CT]-3'), a frequently occurring elicitor-responsive cis-acting element. The polypeptide is Probable WRKY transcription factor 65 (WRKY65) (Arabidopsis thaliana (Mouse-ear cress)).